Reading from the N-terminus, the 301-residue chain is Homoserine O-acetyltransferase (301 aa).

Catalysis depends on cysteine 142, which acts as the Acyl-thioester intermediate. The substrate site is built by lysine 163 and serine 192. The active-site Proton acceptor is histidine 235. Glutamate 237 is a catalytic residue. Arginine 249 contacts substrate.

This sequence belongs to the MetA family.

Its subcellular location is the cytoplasm. The catalysed reaction is L-homoserine + acetyl-CoA = O-acetyl-L-homoserine + CoA. Its pathway is amino-acid biosynthesis; L-methionine biosynthesis via de novo pathway; O-acetyl-L-homoserine from L-homoserine: step 1/1. Functionally, transfers an acetyl group from acetyl-CoA to L-homoserine, forming acetyl-L-homoserine. This Bacillus cytotoxicus (strain DSM 22905 / CIP 110041 / 391-98 / NVH 391-98) protein is Homoserine O-acetyltransferase.